A 759-amino-acid polypeptide reads, in one-letter code: Serine/threonine-protein kinase HRK1 (759 aa).

Positions 1-32 (MPNLLSRNPFHGHHNDHHHDRENSSNNPPQLI) are disordered. Ser37 carries the post-translational modification Phosphoserine. The segment at 45 to 162 (KQSNDSLRSE…PPPSKSTSTV (118 aa)) is disordered. Residues 59 to 97 (SMKSTTTTTNYTTTNLNNNTHSHSNATSISTNNYNNNYE) are compositionally biased toward low complexity. The segment covering 113 to 122 (SPASPKQTHS) has biased composition (polar residues). Residues 215-722 (GKLGKLLGSG…LDDIFNDEWF (508 aa)) form the Protein kinase domain. Residues 221 to 229 (LGSGAGGSV) and Lys244 each bind ATP. Asp340 (proton acceptor) is an active-site residue. Phosphoserine is present on residues Ser382 and Ser472. Residues 493-502 (PNTPASIQGK) show a composition bias toward polar residues. Disordered stretches follow at residues 493-578 (PNTP…GRVD) and 614-682 (AANA…KIIH). Residue Thr495 is modified to Phosphothreonine. Ser498 is subject to Phosphoserine. Positions 510–519 (VEEETEENKE) are enriched in acidic residues. The segment covering 520 to 547 (DDSNNDKESTPDNDKESTIDIKISKNEN) has biased composition (basic and acidic residues). Low complexity predominate over residues 614-646 (AANANPDMVPQNNPQQQQQQQQQQQQQQQQQQQ). The span at 663 to 672 (ASDNKSSQQH) shows a compositional bias: polar residues.

The protein belongs to the protein kinase superfamily. Ser/Thr protein kinase family.

The protein localises to the cytoplasm. The catalysed reaction is L-seryl-[protein] + ATP = O-phospho-L-seryl-[protein] + ADP + H(+). It carries out the reaction L-threonyl-[protein] + ATP = O-phospho-L-threonyl-[protein] + ADP + H(+). Its function is as follows. Involved in regulating the activity of the plasma membrane proton pump PMA1. This is Serine/threonine-protein kinase HRK1 (HRK1) from Saccharomyces cerevisiae (strain ATCC 204508 / S288c) (Baker's yeast).